Consider the following 318-residue polypeptide: uncharacterized protein (318 aa).

Residues 67-157 (LAFDELEKEK…SLKAIQTSQE (91 aa)) adopt a coiled-coil conformation. Residues 172 to 318 (ESTNKVEKNA…KGFFARLFNL (147 aa)) are disordered. Composition is skewed to basic and acidic residues over residues 175–193 (NKVE…KDSK) and 219–236 (KVDK…EKAS). Residues 237 to 248 (VEQSKNGNAAET) show a composition bias toward polar residues. Basic and acidic residues-rich tracts occupy residues 249–274 (SNKE…HAEA) and 300–310 (SEPKPQEEKKG).

This is an uncharacterized protein from Staphylococcus aureus (strain MW2).